Here is a 155-residue protein sequence, read N- to C-terminus: 6,7-dimethyl-8-ribityllumazine synthase (155 aa).

5-amino-6-(D-ribitylamino)uracil-binding positions include Phe-23, 57–59 (AFE), and 81–83 (AVI). 86–87 (ST) provides a ligand contact to (2S)-2-hydroxy-3-oxobutyl phosphate. The Proton donor role is filled by His-89. Phe-114 provides a ligand contact to 5-amino-6-(D-ribitylamino)uracil. Arg-128 provides a ligand contact to (2S)-2-hydroxy-3-oxobutyl phosphate.

This sequence belongs to the DMRL synthase family.

The catalysed reaction is (2S)-2-hydroxy-3-oxobutyl phosphate + 5-amino-6-(D-ribitylamino)uracil = 6,7-dimethyl-8-(1-D-ribityl)lumazine + phosphate + 2 H2O + H(+). The protein operates within cofactor biosynthesis; riboflavin biosynthesis; riboflavin from 2-hydroxy-3-oxobutyl phosphate and 5-amino-6-(D-ribitylamino)uracil: step 1/2. Catalyzes the formation of 6,7-dimethyl-8-ribityllumazine by condensation of 5-amino-6-(D-ribitylamino)uracil with 3,4-dihydroxy-2-butanone 4-phosphate. This is the penultimate step in the biosynthesis of riboflavin. This chain is 6,7-dimethyl-8-ribityllumazine synthase, found in Trichlorobacter lovleyi (strain ATCC BAA-1151 / DSM 17278 / SZ) (Geobacter lovleyi).